The chain runs to 355 residues: Dual-specificity RNA methyltransferase RlmN (355 aa).

Glutamate 86 serves as the catalytic Proton acceptor. Residues 105–338 enclose the Radical SAM core domain; it reads KEARYTVCVS…CTIRESKGLD (234 aa). A disulfide bridge links cysteine 112 with cysteine 343. [4Fe-4S] cluster-binding residues include cysteine 119, cysteine 123, and cysteine 126. Residues 169 to 170, serine 201, 224 to 226, and asparagine 300 contribute to the S-adenosyl-L-methionine site; these read GE and SLH. The active-site S-methylcysteine intermediate is cysteine 343.

Belongs to the radical SAM superfamily. RlmN family. The cofactor is [4Fe-4S] cluster.

Its subcellular location is the cytoplasm. It catalyses the reaction adenosine(2503) in 23S rRNA + 2 reduced [2Fe-2S]-[ferredoxin] + 2 S-adenosyl-L-methionine = 2-methyladenosine(2503) in 23S rRNA + 5'-deoxyadenosine + L-methionine + 2 oxidized [2Fe-2S]-[ferredoxin] + S-adenosyl-L-homocysteine. It carries out the reaction adenosine(37) in tRNA + 2 reduced [2Fe-2S]-[ferredoxin] + 2 S-adenosyl-L-methionine = 2-methyladenosine(37) in tRNA + 5'-deoxyadenosine + L-methionine + 2 oxidized [2Fe-2S]-[ferredoxin] + S-adenosyl-L-homocysteine. In terms of biological role, specifically methylates position 2 of adenine 2503 in 23S rRNA and position 2 of adenine 37 in tRNAs. m2A2503 modification seems to play a crucial role in the proofreading step occurring at the peptidyl transferase center and thus would serve to optimize ribosomal fidelity. The sequence is that of Dual-specificity RNA methyltransferase RlmN from Nitratiruptor sp. (strain SB155-2).